The primary structure comprises 379 residues: tRNA-specific 2-thiouridylase MnmA (379 aa).

Residues 6 to 13 (AMSGGVDS) and Leu32 each bind ATP. The active-site Nucleophile is the Cys101. Cys101 and Cys199 are joined by a disulfide. Position 125 (Gly125) interacts with ATP. The segment at 148–150 (KDQ) is interaction with tRNA. The active-site Cysteine persulfide intermediate is Cys199.

It belongs to the MnmA/TRMU family.

It is found in the cytoplasm. The enzyme catalyses S-sulfanyl-L-cysteinyl-[protein] + uridine(34) in tRNA + AH2 + ATP = 2-thiouridine(34) in tRNA + L-cysteinyl-[protein] + A + AMP + diphosphate + H(+). In terms of biological role, catalyzes the 2-thiolation of uridine at the wobble position (U34) of tRNA, leading to the formation of s(2)U34. In Paenarthrobacter aurescens (strain TC1), this protein is tRNA-specific 2-thiouridylase MnmA.